Here is a 33-residue protein sequence, read N- to C-terminus: Alpha-amanitin proprotein (33 aa).

Positions M1–P10 are excised as a propeptide. Position 11 is a (3R,4R)-4,5-dihydroxyisoleucine; in form alpha-amanitin (I11). Position 11 is a (3R,4S)-4-hydroxyisoleucine; in form gamma-amanitin (I11). Residues I11–P18 constitute a cross-link (cyclopeptide (Ile-Pro)). The segment at residues W12–C16 is a cross-link (2'-cysteinyl-6'-hydroxytryptophan sulfoxide (Trp-Cys)). P18 is subject to 4-hydroxyproline. A propeptide spanning residues C19–A33 is cleaved from the precursor.

The protein belongs to the MSDIN fungal toxin family. Post-translationally, processed by the macrocyclase-peptidase enzyme POPB to yield a toxic cyclic decapeptide. POPB first removes 10 residues from the N-terminus. Conformational trapping of the remaining peptide forces the enzyme to release this intermediate rather than proceed to macrocyclization. The enzyme rebinds the remaining peptide in a different conformation and catalyzes macrocyclization of the N-terminal 8 residues.

Major toxin belonging to the bicyclic octapeptides amatoxins that acts by binding non-competitively to RNA polymerase II and greatly slowing the elongation of transcripts from target promoters. In Amanita fuligineoides, this protein is Alpha-amanitin proprotein.